A 393-amino-acid chain; its full sequence is Glutamyl-tRNA reductase (393 aa).

Substrate is bound by residues 47-50, serine 98, 103-105, and glutamine 109; these read TCSR and ETD. Cysteine 48 serves as the catalytic Nucleophile. NADP(+) is bound at residue 177–182; sequence GAGAVG.

The protein belongs to the glutamyl-tRNA reductase family. In terms of assembly, homodimer.

The catalysed reaction is (S)-4-amino-5-oxopentanoate + tRNA(Glu) + NADP(+) = L-glutamyl-tRNA(Glu) + NADPH + H(+). It functions in the pathway porphyrin-containing compound metabolism; protoporphyrin-IX biosynthesis; 5-aminolevulinate from L-glutamyl-tRNA(Glu): step 1/2. Its function is as follows. Catalyzes the NADPH-dependent reduction of glutamyl-tRNA(Glu) to glutamate 1-semialdehyde (GSA). The protein is Glutamyl-tRNA reductase of Pyrobaculum neutrophilum (strain DSM 2338 / JCM 9278 / NBRC 100436 / V24Sta) (Thermoproteus neutrophilus).